The primary structure comprises 295 residues: Cuticle collagen 3A3 (295 aa).

The disordered stretch occupies residues 81 to 278; sequence AITSSEENGG…GRPGEPGICP (198 aa). Composition is skewed to pro residues over residues 97–109 and 146–160; these read PGPPGPPGPPGRP and AGPPGPPGKPGPPGD. Triple-helical region regions lie at residues 98-127, 147-203, and 212-277; these read GPPGPPGPPGRPGRPGRPGAPGLPGVPGLP, GPPG…VGED, and GDQG…PGIC. Low complexity predominate over residues 172-182; the sequence is QDGIPGQQGTK. Over residues 217 to 228 the composition is skewed to pro residues; sequence PGEPGPEGPPGE. Positions 229-244 are enriched in low complexity; it reads PGLQGPVGMPGQVGQK. A compositionally biased stretch (pro residues) spans 261-271; sequence RPGPPGPPGRP.

It belongs to the cuticular collagen family.

Functionally, nematode cuticles are composed largely of collagen-like proteins. The cuticle functions both as an exoskeleton and as a barrier to protect the worm from its environment. This is Cuticle collagen 3A3 (3A3) from Haemonchus contortus (Barber pole worm).